The chain runs to 198 residues: Fucoxanthin-chlorophyll a-c binding protein B, chloroplastic (198 aa).

A chloroplast-targeting transit peptide spans 1-31; that stretch reads MKFTVFASLFASAAAFAPAQQAARTSVATNM. 3 consecutive transmembrane segments (helical) span residues 73-94, 114-134, and 174-196; these read ISMLAVAGYLAQEAGWRLGGDI, IPQAGLIQIIAFIGFLETSVM, and GRAAQMGILALMVHEQLGVNILP.

This sequence belongs to the fucoxanthin chlorophyll protein family. In terms of assembly, the LHC complex of chromophytic algae is composed of fucoxanthin, chlorophyll A and C bound non-covalently by fucoxanthin chlorophyll proteins (FCPs). The ratio of the pigments in LHC; fucoxanthin: chlorophyll C: chlorophyll A; (0.6-1): (0.1-0.3): (1).

It is found in the plastid. The protein resides in the chloroplast thylakoid membrane. The light-harvesting complex (LHC) functions as a light receptor, it captures and delivers excitation energy to photosystems with which it is closely associated. Energy is transferred from the carotenoid and chlorophyll C (or B) to chlorophyll A and the photosynthetic reaction centers where it is used to synthesize ATP and reducing power. This is Fucoxanthin-chlorophyll a-c binding protein B, chloroplastic (FCPB) from Phaeodactylum tricornutum (Diatom).